The primary structure comprises 258 residues: NAD kinase (258 aa).

Asp45 (proton acceptor) is an active-site residue. NAD(+)-binding positions include 45–46, 117–118, Asp147, Ala155, 158–163, and Ala182; these read DG, NE, and TAYNYS.

This sequence belongs to the NAD kinase family. Requires a divalent metal cation as cofactor.

It localises to the cytoplasm. The catalysed reaction is NAD(+) + ATP = ADP + NADP(+) + H(+). In terms of biological role, involved in the regulation of the intracellular balance of NAD and NADP, and is a key enzyme in the biosynthesis of NADP. Catalyzes specifically the phosphorylation on 2'-hydroxyl of the adenosine moiety of NAD to yield NADP. The chain is NAD kinase from Xanthomonas oryzae pv. oryzae (strain MAFF 311018).